The chain runs to 377 residues: 3-dehydroquinate synthase (377 aa).

NAD(+)-binding positions include 115–119 (GVIGD), 139–140 (TS), Lys-152, and Lys-161. The Zn(2+) site is built by Glu-194, His-256, and His-275.

The protein belongs to the sugar phosphate cyclases superfamily. Dehydroquinate synthase family. NAD(+) serves as cofactor. Co(2+) is required as a cofactor. Requires Zn(2+) as cofactor.

The protein resides in the cytoplasm. The catalysed reaction is 7-phospho-2-dehydro-3-deoxy-D-arabino-heptonate = 3-dehydroquinate + phosphate. Its pathway is metabolic intermediate biosynthesis; chorismate biosynthesis; chorismate from D-erythrose 4-phosphate and phosphoenolpyruvate: step 2/7. Catalyzes the conversion of 3-deoxy-D-arabino-heptulosonate 7-phosphate (DAHP) to dehydroquinate (DHQ). In Rhizobium meliloti (strain 1021) (Ensifer meliloti), this protein is 3-dehydroquinate synthase.